The following is a 965-amino-acid chain: MTTRNLDKLASIDAQLRQLVPAKVSEDDKLVEYDALLLDRFLDILQDLHGEDLKETVQECYELSAEYEAKHDPKKLEELGNVLTSLDPGDSIVIAKAFSHMLNLANLAEEVQIAYRRRQKLKKKGDFGDESNATTESDIEETFKKLVGDLKKSPQEVFDAIKNQTVDLVLTAHPTQSVRRSLLQKHGRIRDCLAQLYAKDITPDDKQELDEALQREIQAAFRTDEIRRTPPTPQDEMRAGMSYFHETIWKGVPKFLRRVDTALKNIGINERVPYNAPLIQFSSWMGGDRDGNPRVTPEVTRDVCLLARMMAANLYYSQIEDLMFELSMWRCNEELRVRADDLQRSSRRDEKHYIEFWKQVPPNEPYRVILGDVRDKLYQTRERARQLLGHGYSEIPEEATYTNIEQFLEPLELCYRSLCACGDLSIADGSLLDFLRQVSTFGLSLVRLDIRQESDRHTDVLDAITQHLEIGSYRDWSEERRQEWLLSELSGKRPLFGPDLPKTEEIADVLDTFHVIAELPADCFGAYIISMATAPSDVLAVELLQRECRVRQPLRVVPLFEKLADLDAAPAAVARLFSIEWYRNRINGKQEVMIGYSDSGKDAGRLSAAWQLYKAQEELIQVAKEFDVKLTMFHGRGGTVGRGGGPAHLAILSQPPETIHGSLRVTVQGEVIEQSFGEEHLCFRTLQRFTAATLEHGMHPPVSPKPEWRALMDEIAVVATEKYRSIVFKEPRFVEYFRLATPELEYGRMNIGSRPSKRKPSGGIESLRAIPWIFAWTQTRFHLPVWLGFGAAFKYAIEKDIKNLRMLQEMYNAWPFFRVTIDLVEMVFAKGDPGIAALFDKLLVSEDLWSFGELLRSKYEETKSLLLQIAGHKDLLEGDPYLKQRLRLRDSYITTLNVCQAYTLKRIRDPDYSVTPRPHISKEYMEAKPATELVNLNPTSEYAPGLEDTLILTMKGIAAGMQNTG.

Serine 11 carries the phosphoserine modification. Residues histidine 173 and lysine 601 contribute to the active site.

It belongs to the PEPCase type 1 family. Homotetramer. Mg(2+) serves as cofactor.

It is found in the cytoplasm. It carries out the reaction oxaloacetate + phosphate = phosphoenolpyruvate + hydrogencarbonate. It functions in the pathway photosynthesis; C3 acid pathway. With respect to regulation, by light-reversible phosphorylation. Through the carboxylation of phosphoenolpyruvate (PEP) it forms oxaloacetate, a four-carbon dicarboxylic acid source for the tricarboxylic acid cycle. The protein is Phosphoenolpyruvate carboxylase (PPC1) of Solanum tuberosum (Potato).